Consider the following 94-residue polypeptide: Large ribosomal subunit protein eL36 (94 aa).

Residues 1 to 25 show a composition bias toward basic residues; it reads MKNAYKKVRVRYPVKRPDVKRKQRG. A disordered region spans residues 1–30; that stretch reads MKNAYKKVRVRYPVKRPDVKRKQRGPRAET.

It belongs to the eukaryotic ribosomal protein eL36 family. Component of the large ribosomal subunit.

It localises to the cytoplasm. This is Large ribosomal subunit protein eL36 (RPL36) from Encephalitozoon cuniculi (strain GB-M1) (Microsporidian parasite).